The chain runs to 435 residues: Zinc finger CCCH domain-containing protein 10 (435 aa).

The tract at residues 1 to 36 (MPDRDSYANGTGSSGGGPGGGGSEEASGAGTGSGGA) is disordered. A compositionally biased stretch (gly residues) spans 12–35 (GSSGGGPGGGGSEEASGAGTGSGG). C3H1-type zinc fingers lie at residues 36–63 (ATSD…HPDM), 73–99 (KNEF…HGSK), and 134–161 (KEEV…HLQR). The segment at 166 to 190 (DARGGGGTGGGGSTGSAPPGRRHDL) is disordered. A compositionally biased stretch (gly residues) spans 168 to 179 (RGGGGTGGGGST). Omega-N-methylarginine is present on residues Arg-186 and Arg-187. Residues 235 to 281 (GVECRLLEEENALLRKRVEELKKQVSNLLATNEVLLEQNAQFRNQAK) are a coiled coil. The segment covering 315–331 (TTLSSQALQPRPVSQQE) has biased composition (polar residues). A disordered region spans residues 315–363 (TTLSSQALQPRPVSQQELVAPTGAPAAPPTNAAPPAAPPPPPPHLNPEI). The segment covering 340–359 (AAPPTNAAPPAAPPPPPPHL) has biased composition (pro residues).

The protein localises to the nucleus. Specific regulator of miRNA biogenesis. Binds, via the C3H1-type zinc finger domains, to the binding motif 5'-GCAGCGC-3' on microRNA pri-MIR143 and negatively regulates the processing to mature microRNA. The chain is Zinc finger CCCH domain-containing protein 10 (Zc3h10) from Mus musculus (Mouse).